The sequence spans 403 residues: S-adenosylmethionine sensor upstream of mTORC1 (403 aa).

Residues 1–10 (MEPGPGGRGA) show a composition bias toward gly residues. The segment at 1 to 32 (MEPGPGGRGAARGQRPPNAAQPREQERKLEQE) is disordered. Low complexity predominate over residues 11–22 (ARGQRPPNAAQP). Residues 23 to 32 (REQERKLEQE) show a composition bias toward basic and acidic residues. S-adenosyl-L-methionine is bound by residues Arg93, Gly170, Asp188, Asp200, Phe201, and Ser242.

Belongs to the BMT2/SAMTOR family. As to quaternary structure, interacts with the GATOR1 complex; interaction is disrupted when SAMTOR binds S-adenosyl-L-methionine. Interacts with the KICSTOR complex; interaction is disrupted when SAMTOR binds S-adenosyl-L-methionine.

S-adenosyl-L-methionine-binding protein that acts as an inhibitor of mTORC1 signaling via interaction with the GATOR1 and KICSTOR complexes. Acts as a sensor of S-adenosyl-L-methionine to signal methionine sufficiency to mTORC1: in presence of methionine, binds S-adenosyl-L-methionine, leading to disrupt interaction with the GATOR1 and KICSTOR complexes and promote mTORC1 signaling. Upon methionine starvation, S-adenosyl-L-methionine levels are reduced, thereby promoting the association with GATOR1 and KICSTOR, leading to inhibit mTORC1 signaling. Probably also acts as a S-adenosyl-L-methionine-dependent methyltransferase. In Mus musculus (Mouse), this protein is S-adenosylmethionine sensor upstream of mTORC1.